Reading from the N-terminus, the 141-residue chain is Nucleoside diphosphate kinase (141 aa).

Positions 11, 59, 87, 93, 104, and 114 each coordinate ATP. H117 functions as the Pros-phosphohistidine intermediate in the catalytic mechanism.

The protein belongs to the NDK family. In terms of assembly, homotetramer. Mg(2+) serves as cofactor.

Its subcellular location is the cytoplasm. It carries out the reaction a 2'-deoxyribonucleoside 5'-diphosphate + ATP = a 2'-deoxyribonucleoside 5'-triphosphate + ADP. The catalysed reaction is a ribonucleoside 5'-diphosphate + ATP = a ribonucleoside 5'-triphosphate + ADP. Its function is as follows. Major role in the synthesis of nucleoside triphosphates other than ATP. The ATP gamma phosphate is transferred to the NDP beta phosphate via a ping-pong mechanism, using a phosphorylated active-site intermediate. This Nitrosospira multiformis (strain ATCC 25196 / NCIMB 11849 / C 71) protein is Nucleoside diphosphate kinase.